We begin with the raw amino-acid sequence, 143 residues long: Transcription antitermination protein NusB (143 aa).

It belongs to the NusB family.

In terms of biological role, involved in transcription antitermination. Required for transcription of ribosomal RNA (rRNA) genes. Binds specifically to the boxA antiterminator sequence of the ribosomal RNA (rrn) operons. This chain is Transcription antitermination protein NusB, found in Desulforapulum autotrophicum (strain ATCC 43914 / DSM 3382 / VKM B-1955 / HRM2) (Desulfobacterium autotrophicum).